The following is a 566-amino-acid chain: APC membrane recruitment protein 2 (566 aa).

Disordered stretches follow at residues 120–176, 192–237, 277–307, and 342–533; these read KKNG…PGLI, TQKP…SPCS, VTGC…GKKV, and MIPP…RTKI. Basic and acidic residues-rich tracts occupy residues 123–134, 155–168, and 192–204; these read GKSENVRGEQAE, SKKD…KEGA, and TQKP…KSTE. 2 stretches are compositionally biased toward basic and acidic residues: residues 364–377 and 389–411; these read REVK…DRNA and YRKE…RNSD. Low complexity predominate over residues 464-476; the sequence is PPLSHSHSKPLSP. Composition is skewed to polar residues over residues 477–489 and 504–517; these read VTTS…ASSN and HTTN…SGSA.

The protein belongs to the Amer family.

The protein localises to the cell membrane. In terms of biological role, negative regulator of the canonical Wnt signaling pathway involved in neuroectodermal patterning. Acts by specifically binding phosphatidylinositol 4,5-bisphosphate (PtdIns(4,5)P2), translocating to the cell membrane and interacting with key regulators of the canonical Wnt signaling pathway, such as components of the beta-catenin destruction complex. The protein is APC membrane recruitment protein 2 (amer2) of Xenopus tropicalis (Western clawed frog).